The sequence spans 107 residues: Ribosome-associated factor Y (107 aa).

The disordered stretch occupies residues 85–107 (LNKLQHKSESRRADERLKDSFEN).

Associates mainly with 70S ribosomes.

During stationary phase, prevents 70S dimer formation, probably in order to regulate translation efficiency during transition between the exponential and the stationary phases. In addition, during environmental stress such as cold shock or excessive cell density at stationary phase, stabilizes the 70S ribosome against dissociation, inhibits translation initiation and increase translation accuracy. When normal growth conditions are restored, is quickly released from the ribosome. This chain is Ribosome-associated factor Y, found in Haemophilus influenzae (strain ATCC 51907 / DSM 11121 / KW20 / Rd).